We begin with the raw amino-acid sequence, 220 residues long: Deoxyribose-phosphate aldolase 2 (220 aa).

Catalysis depends on aspartate 89, which acts as the Proton donor/acceptor. Lysine 151 (schiff-base intermediate with acetaldehyde) is an active-site residue. Catalysis depends on lysine 180, which acts as the Proton donor/acceptor.

Belongs to the DeoC/FbaB aldolase family. DeoC type 1 subfamily.

Its subcellular location is the cytoplasm. It catalyses the reaction 2-deoxy-D-ribose 5-phosphate = D-glyceraldehyde 3-phosphate + acetaldehyde. Its pathway is carbohydrate degradation; 2-deoxy-D-ribose 1-phosphate degradation; D-glyceraldehyde 3-phosphate and acetaldehyde from 2-deoxy-alpha-D-ribose 1-phosphate: step 2/2. Functionally, catalyzes a reversible aldol reaction between acetaldehyde and D-glyceraldehyde 3-phosphate to generate 2-deoxy-D-ribose 5-phosphate. The protein is Deoxyribose-phosphate aldolase 2 of Staphylococcus aureus (strain MSSA476).